The chain runs to 63 residues: Large ribosomal subunit protein uL29 (63 aa).

This sequence belongs to the universal ribosomal protein uL29 family.

The polypeptide is Large ribosomal subunit protein uL29 (Vibrio campbellii (strain ATCC BAA-1116)).